A 417-amino-acid chain; its full sequence is Spermidine/putrescine import ATP-binding protein PotA (417 aa).

The ABC transporter domain maps to 5–308 (IILKDLTKVF…PANRFVAQFV (304 aa)). 37–44 (GPSGCGKT) lines the ATP pocket. The interval 105 to 177 (DFNSKIKDNL…TALKCKKINK (73 aa)) is insert.

The protein belongs to the ABC transporter superfamily. Spermidine/putrescine importer (TC 3.A.1.11.1) family. The complex is composed of two ATP-binding proteins (PotA), two transmembrane proteins (PotB and PotC) and a solute-binding protein (PotD).

The protein resides in the cell membrane. The catalysed reaction is ATP + H2O + polyamine-[polyamine-binding protein]Side 1 = ADP + phosphate + polyamineSide 2 + [polyamine-binding protein]Side 1.. Part of the ABC transporter complex PotABCD involved in spermidine/putrescine import. Responsible for energy coupling to the transport system. The sequence is that of Spermidine/putrescine import ATP-binding protein PotA from Aster yellows witches'-broom phytoplasma (strain AYWB).